A 122-amino-acid polypeptide reads, in one-letter code: Biogenesis of lysosome-related organelles complex 1 subunit CNL1 (122 aa).

Residues 1–10 (MQDNSSHSRE) are compositionally biased toward basic and acidic residues. Residues 1–21 (MQDNSSHSRESASAGDDPLGI) are disordered. A coiled-coil region spans residues 63-95 (ENTIDKNIAKFKELLEKCDTLENHYEMLNQLAI).

It belongs to the BLOC1S4 family. In terms of assembly, component of the biogenesis of lysosome-related organelles complex-1 (BLOC-1) composed of at least BLI1, BLS1, CNL1, KXD1, SNN1 and VAB2.

The protein localises to the cytoplasm. Component of the biogenesis of lysosome-related organelles complex-1 (BLOC-1), a complex that is involved in endosomal cargo sorting. This is Biogenesis of lysosome-related organelles complex 1 subunit CNL1 (CLN1) from Saccharomyces cerevisiae (strain RM11-1a) (Baker's yeast).